We begin with the raw amino-acid sequence, 365 residues long: MAKKIRVLIIDDSASIRQTLTHVLEQDPDIEIMAVASDPFMAARKLQEEIPDVITLDVEMPRMDGITFLRKLMSQRPIPVVMCSSLTEAGSETLLQALEAGAVDVILKSKIGAADSLSDDAMRIREVVKSASHARLSNVRRAAGTIRSASVEGPAKKLTADVMLPPPTGRAMAKTTEMVVCVGASTGGTEALREFLEELPANAPGMVIVQHMPEKFTAAFAKRLNGLCEVEVKEAVDGDPVLRGHVLIAPGDKHMLLERQGARYYVSVKTGPLVSRHRPSVDVLFRSAARSAGSNAMGIIMTGMGDDGARGMLEMHQAGAYTVAQDEASSVVFGMPKEAIAKGGVDRILPLDQIAREVLITQQKF.

Residues 6–123 (RVLIIDDSAS…ADSLSDDAMR (118 aa)) enclose the Response regulatory domain. Residue D57 is modified to 4-aspartylphosphate. Residues 173–359 (AKTTEMVVCV…PLDQIAREVL (187 aa)) enclose the CheB-type methylesterase domain. Residues S185, H211, and D307 contribute to the active site.

The protein belongs to the CheB family. In terms of processing, phosphorylated by CheA. Phosphorylation of the N-terminal regulatory domain activates the methylesterase activity.

The protein localises to the cytoplasm. It carries out the reaction [protein]-L-glutamate 5-O-methyl ester + H2O = L-glutamyl-[protein] + methanol + H(+). The enzyme catalyses L-glutaminyl-[protein] + H2O = L-glutamyl-[protein] + NH4(+). Its function is as follows. Involved in chemotaxis. Part of a chemotaxis signal transduction system that modulates chemotaxis in response to various stimuli. Catalyzes the demethylation of specific methylglutamate residues introduced into the chemoreceptors (methyl-accepting chemotaxis proteins or MCP) by CheR. Also mediates the irreversible deamidation of specific glutamine residues to glutamic acid. The sequence is that of Protein-glutamate methylesterase/protein-glutamine glutaminase 2 from Rhizobium johnstonii (strain DSM 114642 / LMG 32736 / 3841) (Rhizobium leguminosarum bv. viciae).